Consider the following 308-residue polypeptide: D-alanine--D-alanine ligase (308 aa).

An ATP-grasp domain is found at 103–302 (KTVMATAGVP…FDELVQWMVE (200 aa)). Residue 130–184 (MAPPYVIKPVADGSSVGVFIVTEDQAHPPQELFRDDWPHGEELLVEKYIAGRELT) coordinates ATP. The Mg(2+) site is built by Asp252, Glu269, and Asn271.

This sequence belongs to the D-alanine--D-alanine ligase family. Mg(2+) is required as a cofactor. Requires Mn(2+) as cofactor.

The protein localises to the cytoplasm. It carries out the reaction 2 D-alanine + ATP = D-alanyl-D-alanine + ADP + phosphate + H(+). It participates in cell wall biogenesis; peptidoglycan biosynthesis. Its function is as follows. Cell wall formation. The sequence is that of D-alanine--D-alanine ligase from Afipia carboxidovorans (strain ATCC 49405 / DSM 1227 / KCTC 32145 / OM5) (Oligotropha carboxidovorans).